A 366-amino-acid polypeptide reads, in one-letter code: Isocitrate dehydrogenase [NAD] subunit alpha, mitochondrial (366 aa).

The N-terminal 27 residues, 1-27, are a transit peptide targeting the mitochondrion; sequence MAGPAWISKVSRLLGAFHNPKQVTRGF. N6-succinyllysine is present on K77. T101 is subject to Phosphothreonine. Residues R115, R125, and R146 each contribute to the substrate site. K223 is modified (N6-acetyllysine). Residues D233, D257, and D261 each contribute to the Mg(2+) site. N6-acetyllysine; alternate is present on K343. At K343 the chain carries N6-succinyllysine; alternate. K350 carries the post-translational modification N6-succinyllysine.

Belongs to the isocitrate and isopropylmalate dehydrogenases family. As to quaternary structure, heterooligomer of subunits alpha (IDH3A), beta (IDH3B), and gamma (IDH3G) in the apparent ratio of 2:1:1. The heterodimer containing one IDH3A and one IDH3B subunit and the heterodimer containing one IDH3A and one IDH3G subunit assemble into a heterotetramer (which contains two subunits of IDH3A, one of IDH3B and one of IDH3G) and further into the heterooctamer. Mg(2+) serves as cofactor. It depends on Mn(2+) as a cofactor.

The protein localises to the mitochondrion. It catalyses the reaction D-threo-isocitrate + NAD(+) = 2-oxoglutarate + CO2 + NADH. The heterotetramer and the heterodimer composed of IDH3A and IDH3G subunits can be allosterically activated by citrate (CIT) or/and ADP, and the two activators can act independently or synergistically. The heterodimer composed of IDH3A and IDH3B subunits cannot be allosterically regulated and the allosteric regulation of the heterotetramer is through the IDH3G subunit and not the IDH3B subunit. The IDH3G subunit contains the allosteric site which consists of a CIT-binding site and an ADP-binding site, and the binding of CIT and ADP causes conformational changes at the allosteric site which are transmitted to the active site in the catalytic subunit (IDH3A) through a cascade of conformational changes at the heterodimer interface, leading to stabilization of the isocitrate-binding at the active site and thus activation of the enzyme. ATP can activate the heterotetramer and the heterodimer composed of IDH3A and IDH3G subunits at low concentrations but inhibits their activities at high concentrations, whereas ATP exhibits only inhibitory effect on the heterodimer composed of IDH3A and IDH3B subunits. In terms of biological role, catalytic subunit of the enzyme which catalyzes the decarboxylation of isocitrate (ICT) into alpha-ketoglutarate. The heterodimer composed of the alpha (IDH3A) and beta (IDH3B) subunits and the heterodimer composed of the alpha (IDH3A) and gamma (IDH3G) subunits, have considerable basal activity but the full activity of the heterotetramer (containing two subunits of IDH3A, one of IDH3B and one of IDH3G) requires the assembly and cooperative function of both heterodimers. The sequence is that of Isocitrate dehydrogenase [NAD] subunit alpha, mitochondrial from Homo sapiens (Human).